Consider the following 1241-residue polypeptide: DNA-directed RNA polymerase subunit beta (1241 aa).

The interval 1195 to 1219 (PQDVQENVSGENVDAGYENEDVDID) is disordered.

The protein belongs to the RNA polymerase beta chain family. In terms of assembly, the RNAP catalytic core consists of 2 alpha, 1 beta, 1 beta' and 1 omega subunit. When a sigma factor is associated with the core the holoenzyme is formed, which can initiate transcription.

It carries out the reaction RNA(n) + a ribonucleoside 5'-triphosphate = RNA(n+1) + diphosphate. Functionally, DNA-dependent RNA polymerase catalyzes the transcription of DNA into RNA using the four ribonucleoside triphosphates as substrates. In Clostridium acetobutylicum (strain ATCC 824 / DSM 792 / JCM 1419 / IAM 19013 / LMG 5710 / NBRC 13948 / NRRL B-527 / VKM B-1787 / 2291 / W), this protein is DNA-directed RNA polymerase subunit beta.